The following is a 43-amino-acid chain: Cytochrome b559 subunit beta (43 aa).

Residues 18–34 (WLAIHGLAIPTVFFFGA) form a helical membrane-spanning segment. Histidine 22 contributes to the heme binding site.

This sequence belongs to the PsbE/PsbF family. In terms of assembly, heterodimer of an alpha subunit and a beta subunit. PSII is composed of 1 copy each of membrane proteins PsbA, PsbB, PsbC, PsbD, PsbE, PsbF, PsbH, PsbI, PsbJ, PsbK, PsbL, PsbM, PsbT, PsbY, PsbZ, Psb30/Ycf12, at least 3 peripheral proteins of the oxygen-evolving complex and a large number of cofactors. It forms dimeric complexes. Heme b serves as cofactor.

It localises to the plastid. It is found in the chloroplast thylakoid membrane. In terms of biological role, this b-type cytochrome is tightly associated with the reaction center of photosystem II (PSII). PSII is a light-driven water:plastoquinone oxidoreductase that uses light energy to abstract electrons from H(2)O, generating O(2) and a proton gradient subsequently used for ATP formation. It consists of a core antenna complex that captures photons, and an electron transfer chain that converts photonic excitation into a charge separation. This is Cytochrome b559 subunit beta from Cyanidium caldarium (Red alga).